The following is a 558-amino-acid chain: Zinc finger protein piragua (558 aa).

Positions serine 15 to glutamine 94 constitute a ZAD domain. Residues cysteine 17, cysteine 20, cysteine 67, and cysteine 70 each coordinate Zn(2+). Acidic residues predominate over residues leucine 132 to aspartate 177. The disordered stretch occupies residues leucine 132–methionine 178. C2H2-type zinc fingers lie at residues phenylalanine 208–histidine 231, tyrosine 237–histidine 260, tyrosine 266–histidine 288, phenylalanine 294–histidine 316, phenylalanine 322–histidine 344, phenylalanine 350–histidine 372, tyrosine 414–histidine 436, phenylalanine 441–histidine 464, and phenylalanine 468–histidine 490.

Its function is as follows. May be involved in transcriptional regulation. The function of this protein is unclear. According to one report, it is required for development and viability since mutants display defects in several developmental morphogenetic processes including dorsal closure and head involution, and die by the first instar larval stage. It may also be involved in fwe-mediated cellular competition. However, according to another report, it is not required for development or viability since mutants have no visible phenotype and are fertile. The sequence is that of Zinc finger protein piragua from Drosophila melanogaster (Fruit fly).